The chain runs to 160 residues: UPF0262 protein ELI_10965 (160 aa).

Belongs to the UPF0262 family.

This chain is UPF0262 protein ELI_10965, found in Erythrobacter litoralis (strain HTCC2594).